A 483-amino-acid polypeptide reads, in one-letter code: GTPase Der (483 aa).

EngA-type G domains are found at residues 3–167 (FTLA…GEER) and 212–387 (LRIA…EIWN). GTP is bound by residues 9–16 (GRPNVGKS), 56–60 (DTAGL), 119–122 (NKAE), 218–225 (GRPNAGKS), 265–269 (DTAGM), and 330–333 (NKWD). Residues 388–472 (RRISTGRLNR…PIRLSLRTSD (85 aa)) form the KH-like domain.

This sequence belongs to the TRAFAC class TrmE-Era-EngA-EngB-Septin-like GTPase superfamily. EngA (Der) GTPase family. In terms of assembly, associates with the 50S ribosomal subunit.

GTPase that plays an essential role in the late steps of ribosome biogenesis. This Brucella ovis (strain ATCC 25840 / 63/290 / NCTC 10512) protein is GTPase Der.